Reading from the N-terminus, the 333-residue chain is 4-hydroxyproline 2-epimerase (333 aa).

Cysteine 90 (proton acceptor) is an active-site residue. Substrate is bound by residues 91-92, histidine 223, and aspartate 249; that span reads GH. The active-site Proton donor is cysteine 253. Residue 254–255 coordinates substrate; it reads GT.

It belongs to the proline racemase family.

It carries out the reaction trans-4-hydroxy-L-proline = cis-4-hydroxy-D-proline. In terms of biological role, catalyzes the epimerization of trans-4-hydroxy-L-proline (t4LHyp) to cis-4-hydroxy-D-proline (c4DHyp). Is likely involved in a degradation pathway that converts t4LHyp to alpha-ketoglutarate. Displays no proline racemase activity. The polypeptide is 4-hydroxyproline 2-epimerase (Shewanella loihica (strain ATCC BAA-1088 / PV-4)).